Consider the following 254-residue polypeptide: Casein kinase II subunit beta-2 (254 aa).

Belongs to the casein kinase 2 subunit beta family. As to quaternary structure, tetramer composed of two alpha chains, one beta chain and one beta' chain. Post-translationally, phosphorylated by alpha subunit.

Its function is as follows. Regulatory subunit of casein kinase II/CK2. As part of the kinase complex regulates the basal catalytic activity of the alpha subunit a constitutively active serine/threonine-protein kinase that phosphorylates a large number of substrates containing acidic residues C-terminal to the phosphorylated serine or threonine. This chain is Casein kinase II subunit beta-2, found in Schizosaccharomyces pombe (strain 972 / ATCC 24843) (Fission yeast).